The chain runs to 264 residues: Undecaprenyl-diphosphatase (264 aa).

A run of 7 helical transmembrane segments spans residues 42–62 (ESLL…LVVF), 82–102 (TQFS…GLLF), 109–129 (LFGG…LLLW), 146–166 (AFII…RSGA), 184–204 (FSFL…LMSG), 215–235 (ILAT…TWMI), and 243–263 (LSWF…FAYA).

It belongs to the UppP family.

Its subcellular location is the cell membrane. It carries out the reaction di-trans,octa-cis-undecaprenyl diphosphate + H2O = di-trans,octa-cis-undecaprenyl phosphate + phosphate + H(+). Functionally, catalyzes the dephosphorylation of undecaprenyl diphosphate (UPP). Confers resistance to bacitracin. This is Undecaprenyl-diphosphatase from Christiangramia forsetii (strain DSM 17595 / CGMCC 1.15422 / KT0803) (Gramella forsetii).